Here is a 595-residue protein sequence, read N- to C-terminus: Putative histone-lysine N-methyltransferase PRDM6 (595 aa).

The tract at residues 27 to 90 is disordered; it reads FPHGGAGPLK…STPASSSTSA (64 aa). The segment covering 30–40 has biased composition (gly residues); it reads GGAGPLKGSGA. A compositionally biased stretch (pro residues) spans 49-59; the sequence is PLQPPPPPPPP. Over residues 71–90 the composition is skewed to low complexity; that stretch reads PRPASLSSASSTPASSSTSA. In terms of domain architecture, SET spans 246-365; that stretch reads REVCLCTSTV…RGTELLVWYN (120 aa). The C2H2-type 1; degenerate zinc finger occupies 473-495; it reads WKCGQCFKTFTQRILLQMHVCTQ. 2 consecutive C2H2-type zinc fingers follow at residues 501–523 and 529–551; these read YQCG…VVTH and FKCG…IRTH. A C2H2-type 4; degenerate zinc finger spans residues 557–579; it reads FKCERCERSFTQATQLSRHQRMP.

The protein belongs to the class V-like SAM-binding methyltransferase superfamily. In terms of assembly, interacts with HDAC1, HDAC2, HDAC3, CBX1 and EP300.

It is found in the nucleus. It catalyses the reaction L-lysyl(20)-[histone H4] + S-adenosyl-L-methionine = N(6)-methyl-L-lysyl(20)-[histone H4] + S-adenosyl-L-homocysteine + H(+). Functionally, putative histone methyltransferase that acts as a transcriptional repressor of smooth muscle gene expression. Promotes the transition from differentiated to proliferative smooth muscle by suppressing differentiation and maintaining the proliferative potential of vascular smooth muscle cells. Also plays a role in endothelial cells by inhibiting endothelial cell proliferation, survival and differentiation. It is unclear whether it has histone methyltransferase activity in vivo. According to some authors, it does not act as a histone methyltransferase by itself and represses transcription by recruiting EHMT2/G9a. According to others, it possesses histone methyltransferase activity when associated with other proteins and specifically methylates 'Lys-20' of histone H4 in vitro. 'Lys-20' methylation represents a specific tag for epigenetic transcriptional repression. This Homo sapiens (Human) protein is Putative histone-lysine N-methyltransferase PRDM6 (PRDM6).